A 1342-amino-acid polypeptide reads, in one-letter code: DNA-directed RNA polymerase subunit beta (1342 aa).

This sequence belongs to the RNA polymerase beta chain family. The RNAP catalytic core consists of 2 alpha, 1 beta, 1 beta' and 1 omega subunit. When a sigma factor is associated with the core the holoenzyme is formed, which can initiate transcription.

The enzyme catalyses RNA(n) + a ribonucleoside 5'-triphosphate = RNA(n+1) + diphosphate. DNA-dependent RNA polymerase catalyzes the transcription of DNA into RNA using the four ribonucleoside triphosphates as substrates. The polypeptide is DNA-directed RNA polymerase subunit beta (Enterobacter sp. (strain 638)).